The sequence spans 201 residues: Ras-related protein Rab-9B (201 aa).

Residues Val18, Gly19, Lys20, Ser21, Ser22, Asp33, Ser34, Ala36, His38, and Thr39 each contribute to the GTP site. Ser21 contacts Mg(2+). The Switch 1 motif lies at 31–42 (KFDSQAFHTIGV). A Phosphoserine modification is found at Ser34. Thr39 and Asp62 together coordinate Mg(2+). The Switch 2 motif lies at 64-78 (AGQERFKSLRTPFYR). GTP is bound by residues Gly65, Asn124, Lys125, Ala155, and Lys156. Residues Cys200 and Cys201 are each lipidated (S-geranylgeranyl cysteine).

It belongs to the small GTPase superfamily. Rab family. Interacts (GTP-bound form) with SGSM1; the GDP-bound form has much lower affinity for SGSM1. The GTP-bound form but not the GDP-bound form interacts with HPS4 and the BLOC-3 complex (heterodimer of HPS1 and HPS4) but does not interact with HPS1 alone. Interacts (GTP-bound form) with NDE1. Requires Mg(2+) as cofactor.

The protein resides in the cell membrane. It is found in the cytoplasmic vesicle. It localises to the phagosome membrane. It catalyses the reaction GTP + H2O = GDP + phosphate + H(+). Its activity is regulated as follows. Regulated by guanine nucleotide exchange factors (GEFs) which promote the exchange of bound GDP for free GTP. Regulated by GTPase activating proteins (GAPs) which increase the GTP hydrolysis activity. Inhibited by GDP dissociation inhibitors (GDIs). Its function is as follows. The small GTPases Rab are key regulators of intracellular membrane trafficking, from the formation of transport vesicles to their fusion with membranes. Rabs cycle between an inactive GDP-bound form and an active GTP-bound form that is able to recruit to membranes different sets of downstream effectors directly responsible for vesicle formation, movement, tethering and fusion. RAB9B is involved in the transport of proteins between the endosomes and the trans Golgi network. May use NDE1/NDEL1 as an effector to interact with the dynein motor complex in order to control retrograde trafficking of RAB9-associated late endosomes to the TGN. The sequence is that of Ras-related protein Rab-9B (RAB9B) from Pongo abelii (Sumatran orangutan).